Consider the following 526-residue polypeptide: Sterol 14-alpha demethylase CYP51A (526 aa).

The helical transmembrane segment at 27–47 (IGFAVFLVLSVVLNVLNQLLF) threads the bilayer. Tyrosine 123 is a binding site for lanosterol. Cysteine 470 contacts heme.

Belongs to the cytochrome P450 family. The cofactor is heme.

It is found in the endoplasmic reticulum membrane. It carries out the reaction a 14alpha-methyl steroid + 3 reduced [NADPH--hemoprotein reductase] + 3 O2 = a Delta(14) steroid + formate + 3 oxidized [NADPH--hemoprotein reductase] + 4 H2O + 4 H(+). The catalysed reaction is a 14alpha-methyl steroid + reduced [NADPH--hemoprotein reductase] + O2 = a 14alpha-hydroxymethyl steroid + oxidized [NADPH--hemoprotein reductase] + H2O + H(+). The enzyme catalyses a 14alpha-hydroxymethyl steroid + reduced [NADPH--hemoprotein reductase] + O2 = a 14alpha-formyl steroid + oxidized [NADPH--hemoprotein reductase] + 2 H2O + H(+). It catalyses the reaction a 14alpha-formyl steroid + reduced [NADPH--hemoprotein reductase] + O2 = a Delta(14) steroid + formate + oxidized [NADPH--hemoprotein reductase] + H2O + 2 H(+). It carries out the reaction lanosterol + 3 reduced [NADPH--hemoprotein reductase] + 3 O2 = 4,4-dimethyl-5alpha-cholesta-8,14,24-trien-3beta-ol + formate + 3 oxidized [NADPH--hemoprotein reductase] + 4 H2O + 4 H(+). The catalysed reaction is lanosterol + reduced [NADPH--hemoprotein reductase] + O2 = 32-hydroxylanosterol + oxidized [NADPH--hemoprotein reductase] + H2O + H(+). The enzyme catalyses 32-hydroxylanosterol + reduced [NADPH--hemoprotein reductase] + O2 = 32-oxolanosterol + oxidized [NADPH--hemoprotein reductase] + 2 H2O + H(+). It catalyses the reaction 32-oxolanosterol + reduced [NADPH--hemoprotein reductase] + O2 = 4,4-dimethyl-5alpha-cholesta-8,14,24-trien-3beta-ol + formate + oxidized [NADPH--hemoprotein reductase] + H2O + 2 H(+). It carries out the reaction eburicol + 3 reduced [NADPH--hemoprotein reductase] + 3 O2 = 14-demethyleburicol + formate + 3 oxidized [NADPH--hemoprotein reductase] + 4 H2O + 4 H(+). The catalysed reaction is eburicol + reduced [NADPH--hemoprotein reductase] + O2 = 32-hydroxyeburicol + oxidized [NADPH--hemoprotein reductase] + H2O + H(+). The enzyme catalyses 32-hydroxyeburicol + reduced [NADPH--hemoprotein reductase] + O2 = 32-oxoeburicol + oxidized [NADPH--hemoprotein reductase] + 2 H2O + H(+). It catalyses the reaction 32-oxoeburicol + reduced [NADPH--hemoprotein reductase] + O2 = 14-demethyleburicol + formate + oxidized [NADPH--hemoprotein reductase] + H2O + 2 H(+). It participates in steroid metabolism; ergosterol biosynthesis. Together with cyp51A and cyp51C, encodes the sterol 14alpha-demethylase that plays a critical role in the third module of ergosterol biosynthesis pathway, being ergosterol the major sterol component in fungal membranes that participates in a variety of functions. Essential for ascospore production. The third module or late pathway involves the ergosterol synthesis itself through consecutive reactions that mainly occur in the endoplasmic reticulum (ER) membrane. In filamentous fungi, during the initial step of this module, lanosterol (lanosta-8,24-dien-3beta-ol) can be metabolized to eburicol. Sterol 14alpha-demethylase catalyzes the three-step oxidative removal of the 14alpha-methyl group (C-32) of both these sterols in the form of formate, and converts eburicol and lanosterol to 14-demethyleburicol (4,4,24-trimethylergosta-8,14,24(28)-trienol) and 4,4-dimethyl-5alpha-cholesta-8,14,24-trien-3beta-ol, respectively, which are further metabolized by other enzymes in the pathway to ergosterol. Can also use substrates not intrinsic to fungi, such as 24,25-dihydrolanosterol (DHL), producing 4,4'-dimethyl-8,14-cholestadien-3-beta-ol, but at lower rates than the endogenous substrates. The sequence is that of Sterol 14-alpha demethylase CYP51A from Gibberella zeae (strain ATCC MYA-4620 / CBS 123657 / FGSC 9075 / NRRL 31084 / PH-1) (Wheat head blight fungus).